We begin with the raw amino-acid sequence, 242 residues long: Glutamate transport ATP-binding protein GluA (242 aa).

One can recognise an ABC transporter domain in the interval 2-236 (IKMTGVQKFF…PQTDRAKDFL (235 aa)). 34–41 (GPSGSGKS) lines the ATP pocket.

The protein belongs to the ABC transporter superfamily. The complex is composed of two ATP-binding proteins (GluA), two transmembrane proteins (GluC and GluD) and a solute-binding protein (GluB).

The protein localises to the cell membrane. It carries out the reaction a polar amino acid(out) + ATP + H2O = a polar amino acid(in) + ADP + phosphate + H(+). The catalysed reaction is L-glutamate(out) + ATP + H2O = L-glutamate(in) + ADP + phosphate + H(+). Its function is as follows. Part of the ABC transporter complex GluABCD involved in glutamate uptake. Probably responsible for energy coupling to the transport system. This is Glutamate transport ATP-binding protein GluA from Corynebacterium efficiens (strain DSM 44549 / YS-314 / AJ 12310 / JCM 11189 / NBRC 100395).